The primary structure comprises 381 residues: Flap endonuclease 1 (381 aa).

An N-domain region spans residues 1 to 105 (MGIKNLATLI…YELDKRKVRR (105 aa)). Mg(2+) is bound at residue Asp-34. Arg-47 and Arg-71 together coordinate DNA. Mg(2+) contacts are provided by Asp-87, Glu-156, Glu-158, Asp-177, and Asp-179. An I-domain region spans residues 120–251 (EIIKHERRLV…VNALKLIKEH (132 aa)). Glu-156 serves as a coordination point for DNA. The DNA site is built by Gly-229 and Asp-231. Asp-231 provides a ligand contact to Mg(2+). An interaction with PCNA region spans residues 339-347 (VQKRLDSFF). The segment at 360-381 (AAKKAKDAKKKAAAKGKIAKRR) is disordered. A compositionally biased stretch (basic residues) spans 365-381 (KDAKKKAAAKGKIAKRR).

Belongs to the XPG/RAD2 endonuclease family. FEN1 subfamily. As to quaternary structure, interacts with PCNA. Three molecules of FEN1 bind to one PCNA trimer with each molecule binding to one PCNA monomer. PCNA stimulates the nuclease activity without altering cleavage specificity. Mg(2+) is required as a cofactor. In terms of processing, phosphorylated. Phosphorylation upon DNA damage induces relocalization to the nuclear plasma.

The protein localises to the nucleus. The protein resides in the nucleolus. It localises to the nucleoplasm. It is found in the mitochondrion. Structure-specific nuclease with 5'-flap endonuclease and 5'-3' exonuclease activities involved in DNA replication and repair. During DNA replication, cleaves the 5'-overhanging flap structure that is generated by displacement synthesis when DNA polymerase encounters the 5'-end of a downstream Okazaki fragment. It enters the flap from the 5'-end and then tracks to cleave the flap base, leaving a nick for ligation. Also involved in the long patch base excision repair (LP-BER) pathway, by cleaving within the apurinic/apyrimidinic (AP) site-terminated flap. Acts as a genome stabilization factor that prevents flaps from equilibrating into structures that lead to duplications and deletions. Also possesses 5'-3' exonuclease activity on nicked or gapped double-stranded DNA, and exhibits RNase H activity. Also involved in replication and repair of rDNA and in repairing mitochondrial DNA. The chain is Flap endonuclease 1 from Kluyveromyces lactis (strain ATCC 8585 / CBS 2359 / DSM 70799 / NBRC 1267 / NRRL Y-1140 / WM37) (Yeast).